The primary structure comprises 175 residues: Large ribosomal subunit protein uL10 (175 aa).

It belongs to the universal ribosomal protein uL10 family. Part of the ribosomal stalk of the 50S ribosomal subunit. The N-terminus interacts with L11 and the large rRNA to form the base of the stalk. The C-terminus forms an elongated spine to which L12 dimers bind in a sequential fashion forming a multimeric L10(L12)X complex.

Functionally, forms part of the ribosomal stalk, playing a central role in the interaction of the ribosome with GTP-bound translation factors. The polypeptide is Large ribosomal subunit protein uL10 (Synechococcus sp. (strain CC9605)).